The chain runs to 786 residues: Ribosome biogenesis protein BOP1 homolog (786 aa).

Residues 1-11 show a composition bias toward basic residues; that stretch reads MTKKLTIKRKV. The interval 1-161 is disordered; the sequence is MTKKLTIKRK…DSDTSDEEDI (161 aa). 4 stretches are compositionally biased toward acidic residues: residues 28-37, 46-55, 62-74, and 86-103; these read DNEEEEEEDL, EDSTDDEGID, SSED…DEEG, and SGDD…EDDA. The segment covering 104-113 has biased composition (basic and acidic residues); the sequence is DAKKSSKNND. Residues 151-160 are compositionally biased toward acidic residues; that stretch reads ADSDTSDEED. WD repeat units follow at residues 447-488, 490-528, 572-614, 617-655, 658-697, 701-740, and 756-786; these read GHTD…RTIE, EDVV…KLLV, THFK…SQIP, KSKG…LIKK, TNSK…KPYQ, LHRN…DLLQ, and REEF…RLFT.

The protein belongs to the WD repeat BOP1/ERB1 family.

The protein localises to the nucleus. It is found in the nucleolus. The protein resides in the nucleoplasm. Required for maturation of ribosomal RNAs and formation of the large ribosomal subunit. The protein is Ribosome biogenesis protein BOP1 homolog of Drosophila pseudoobscura pseudoobscura (Fruit fly).